Reading from the N-terminus, the 100-residue chain is Urease subunit gamma (100 aa).

Belongs to the urease gamma subunit family. As to quaternary structure, heterotrimer of UreA (gamma), UreB (beta) and UreC (alpha) subunits. Three heterotrimers associate to form the active enzyme.

It localises to the cytoplasm. It carries out the reaction urea + 2 H2O + H(+) = hydrogencarbonate + 2 NH4(+). It participates in nitrogen metabolism; urea degradation; CO(2) and NH(3) from urea (urease route): step 1/1. The protein is Urease subunit gamma of Rhodopseudomonas palustris (strain BisB18).